Consider the following 267-residue polypeptide: Tryptophan synthase alpha chain (267 aa).

Active-site proton acceptor residues include Glu49 and Asp60.

The protein belongs to the TrpA family. In terms of assembly, tetramer of two alpha and two beta chains.

The catalysed reaction is (1S,2R)-1-C-(indol-3-yl)glycerol 3-phosphate + L-serine = D-glyceraldehyde 3-phosphate + L-tryptophan + H2O. It participates in amino-acid biosynthesis; L-tryptophan biosynthesis; L-tryptophan from chorismate: step 5/5. Its function is as follows. The alpha subunit is responsible for the aldol cleavage of indoleglycerol phosphate to indole and glyceraldehyde 3-phosphate. The protein is Tryptophan synthase alpha chain of Pelobacter propionicus (strain DSM 2379 / NBRC 103807 / OttBd1).